The following is a 222-amino-acid chain: PKHD-type hydroxylase Syncc9605_1577 (222 aa).

Positions 80–175 (KVHSLLVSRS…RYVCVGWIES (96 aa)) constitute a Fe2OG dioxygenase domain. Positions 98, 100, and 156 each coordinate Fe cation. Arg-166 is a binding site for 2-oxoglutarate.

The cofactor is Fe(2+). L-ascorbate is required as a cofactor.

The protein is PKHD-type hydroxylase Syncc9605_1577 of Synechococcus sp. (strain CC9605).